The chain runs to 294 residues: Acetylglutamate kinase (294 aa).

Residues 63 to 64 (GG), R85, and N188 contribute to the substrate site.

The protein belongs to the acetylglutamate kinase family. ArgB subfamily.

The protein resides in the cytoplasm. The catalysed reaction is N-acetyl-L-glutamate + ATP = N-acetyl-L-glutamyl 5-phosphate + ADP. It functions in the pathway amino-acid biosynthesis; L-arginine biosynthesis; N(2)-acetyl-L-ornithine from L-glutamate: step 2/4. Functionally, catalyzes the ATP-dependent phosphorylation of N-acetyl-L-glutamate. The polypeptide is Acetylglutamate kinase (Methanococcus aeolicus (strain ATCC BAA-1280 / DSM 17508 / OCM 812 / Nankai-3)).